Consider the following 499-residue polypeptide: Patatin-like protein 6 (499 aa).

Residues 111-314 (LSIDSGGMRG…AMSNPTAAAI (204 aa)) enclose the PNPLA domain. The GGXR motif lies at 116 to 119 (GGMR). Catalysis depends on serine 155, which acts as the Nucleophile. Residue aspartate 301 is the Proton acceptor of the active site. The DGA/G motif lies at 301-303 (DGG).

Belongs to the patatin family. In terms of tissue distribution, highly expressed in siliques and at lower levels in roots and flowers.

In terms of biological role, possesses non-specific lipolytic acyl hydrolase (LAH) activity. Hydrolyzes phospholipids as well as galactolipids. May play a role in disease resistance. This is Patatin-like protein 6 (PLP6) from Arabidopsis thaliana (Mouse-ear cress).